A 248-amino-acid polypeptide reads, in one-letter code: Large ribosomal subunit protein uL1 (248 aa).

Belongs to the universal ribosomal protein uL1 family. As to quaternary structure, part of the 50S ribosomal subunit.

In terms of biological role, binds directly to 23S rRNA. The L1 stalk is quite mobile in the ribosome, and is involved in E site tRNA release. Its function is as follows. Protein L1 is also a translational repressor protein, it controls the translation of the L11 operon by binding to its mRNA. The chain is Large ribosomal subunit protein uL1 from Orientia tsutsugamushi (strain Boryong) (Rickettsia tsutsugamushi).